The sequence spans 151 residues: Large ribosomal subunit protein bL9 (151 aa).

The protein belongs to the bacterial ribosomal protein bL9 family.

Binds to the 23S rRNA. This chain is Large ribosomal subunit protein bL9, found in Desulfotalea psychrophila (strain LSv54 / DSM 12343).